A 140-amino-acid polypeptide reads, in one-letter code: Profilin (140 aa).

It belongs to the profilin family. In terms of assembly, occurs in many kinds of cells as a complex with monomeric actin in a 1:1 ratio.

Functionally, binds to actin and affects the structure of the cytoskeleton. At high concentrations, profilin prevents the polymerization of actin, whereas it enhances it at low concentrations. By binding to PIP2, it inhibits the formation of IP3 and DG. This chain is Profilin, found in Suberites domuncula (Sponge).